Reading from the N-terminus, the 196-residue chain is SAGA-associated factor 11 homolog (196 aa).

The SGF11-type zinc-finger motif lies at 102–123 (CTCPNCDRLVAAARFAPHLEKC). The interval 140–196 (TKEGTSASSNSSYVHSGANAGGTDDEDDVDWSSDKRKKKSTQNSRNNGSKKNNGKTF) is disordered. The span at 142-153 (EGTSASSNSSYV) shows a compositional bias: polar residues. Ser-172 is modified (phosphoserine). Positions 182 to 196 (NSRNNGSKKNNGKTF) are enriched in low complexity.

Belongs to the SGF11 family. As to quaternary structure, component of some SAGA transcription coactivator-HAT complexes, at least composed of Ada2b, not/nonstop, Pcaf/Gcn5, Sgf11 and Spt3. Within the SAGA complex, Sgf11, e(y)2, and not/nonstop form an additional subcomplex of SAGA called the DUB module (deubiquitination module). Interacts directly with not/nonstop. Interacts with the AMEX complex component xmas-2. Interacts with Cbp80; important for promoter recruitment of Sgf11 that is not associated with the DUB module.

The protein localises to the nucleus. It localises to the nucleoplasm. It is found in the cytoplasm. Functionally, component of the transcription regulatory histone acetylation (HAT) complex SAGA, a multiprotein complex that activates transcription by remodeling chromatin and mediating histone acetylation and deubiquitination. Within the SAGA complex, participates in a subcomplex that specifically deubiquitinates histone H2B. The SAGA complex is recruited to specific gene promoters by activators, where it is required for transcription. Required for nuclear receptor-mediated transactivation. Binds independently on SAGA to promoters in an RNA-dependent manner. Binds to mRNA and is essential for total mRNA export from the nucleus. Required to counteract heterochromatin silencing. Controls the development of neuronal connectivity in visual system by being required for accurate axon targeting in the optic lobe. Required for expression of ecdysone-induced genes such as br/broad. The protein is SAGA-associated factor 11 homolog of Drosophila persimilis (Fruit fly).